We begin with the raw amino-acid sequence, 259 residues long: Imidazole glycerol phosphate synthase subunit HisF (259 aa).

Active-site residues include D11 and D130.

This sequence belongs to the HisA/HisF family. In terms of assembly, heterodimer of HisH and HisF.

The protein localises to the cytoplasm. The enzyme catalyses 5-[(5-phospho-1-deoxy-D-ribulos-1-ylimino)methylamino]-1-(5-phospho-beta-D-ribosyl)imidazole-4-carboxamide + L-glutamine = D-erythro-1-(imidazol-4-yl)glycerol 3-phosphate + 5-amino-1-(5-phospho-beta-D-ribosyl)imidazole-4-carboxamide + L-glutamate + H(+). The protein operates within amino-acid biosynthesis; L-histidine biosynthesis; L-histidine from 5-phospho-alpha-D-ribose 1-diphosphate: step 5/9. IGPS catalyzes the conversion of PRFAR and glutamine to IGP, AICAR and glutamate. The HisF subunit catalyzes the cyclization activity that produces IGP and AICAR from PRFAR using the ammonia provided by the HisH subunit. In Lactococcus lactis subsp. cremoris (strain SK11), this protein is Imidazole glycerol phosphate synthase subunit HisF.